A 184-amino-acid polypeptide reads, in one-letter code: Large ribosomal subunit protein uL6 (184 aa).

The protein belongs to the universal ribosomal protein uL6 family. Part of the 50S ribosomal subunit.

This protein binds to the 23S rRNA, and is important in its secondary structure. It is located near the subunit interface in the base of the L7/L12 stalk, and near the tRNA binding site of the peptidyltransferase center. This Pseudothermotoga lettingae (strain ATCC BAA-301 / DSM 14385 / NBRC 107922 / TMO) (Thermotoga lettingae) protein is Large ribosomal subunit protein uL6.